Reading from the N-terminus, the 263-residue chain is Probable ABC transporter permease protein ycf63 (263 aa).

6 consecutive transmembrane segments (helical) span residues 43 to 63, 82 to 102, 136 to 156, 159 to 179, 199 to 219, and 230 to 250; these read LVGPGSLNITLLTACFISMVF, AVIVIAFTRELSPVLTAVIIA, LVFPKVAACCIMLPILSTISL, SIAISIFVSFVMYGIPSSIFL, LCFGTIIAFISCQWGLTSSGG, and SVVTILLTIFITDFILSYFMF.

The protein belongs to the MlaE permease family.

The protein resides in the plastid. It is found in the chloroplast membrane. Could be part of an ABC transporter complex. The polypeptide is Probable ABC transporter permease protein ycf63 (ycf63) (Porphyra purpurea (Red seaweed)).